A 546-amino-acid polypeptide reads, in one-letter code: Zinc metalloproteinase nas-9 (546 aa).

An N-terminal signal peptide occupies residues 1–14 (MIFLLFVVFPFVYA). A propeptide spanning residues 15–300 (QLLPELLAGF…GGGGGGRVPR (286 aa)) is cleaved from the precursor. N-linked (GlcNAc...) asparagine glycosylation is present at asparagine 248. The region spanning 308 to 507 (SAVQKWDIWK…IRLLKKMYCR (200 aa)) is the Peptidase M12A domain. 5 cysteine pairs are disulfide-bonded: cysteine 347-cysteine 506, cysteine 372-cysteine 392, cysteine 510-cysteine 546, cysteine 517-cysteine 539, and cysteine 526-cysteine 543. A Zn(2+)-binding site is contributed by histidine 401. The active site involves glutamate 402. Zn(2+) is bound by residues histidine 405 and histidine 411. Positions 510 to 546 (CDDQNVHCGTWALHGYCKMKEQMKWMNENCKASCDKC) constitute a ShKT domain.

Zn(2+) serves as cofactor. Expressed in hypodermis, uterus and spermatheca.

Its subcellular location is the secreted. Functionally, metalloprotease. This Caenorhabditis elegans protein is Zinc metalloproteinase nas-9 (nas-9).